We begin with the raw amino-acid sequence, 118 residues long: Large ribosomal subunit protein uL18 (118 aa).

It belongs to the universal ribosomal protein uL18 family. As to quaternary structure, part of the 50S ribosomal subunit; part of the 5S rRNA/L5/L18/L25 subcomplex. Contacts the 5S and 23S rRNAs.

Its function is as follows. This is one of the proteins that bind and probably mediate the attachment of the 5S RNA into the large ribosomal subunit, where it forms part of the central protuberance. This Campylobacter lari (strain RM2100 / D67 / ATCC BAA-1060) protein is Large ribosomal subunit protein uL18.